Reading from the N-terminus, the 232-residue chain is Ribosomal RNA small subunit methyltransferase G (232 aa).

Residues Gly-75, Phe-80, 126-127 (AE), and Arg-143 contribute to the S-adenosyl-L-methionine site.

This sequence belongs to the methyltransferase superfamily. RNA methyltransferase RsmG family.

Its subcellular location is the cytoplasm. In terms of biological role, specifically methylates the N7 position of a guanine in 16S rRNA. The chain is Ribosomal RNA small subunit methyltransferase G from Fusobacterium nucleatum subsp. nucleatum (strain ATCC 25586 / DSM 15643 / BCRC 10681 / CIP 101130 / JCM 8532 / KCTC 2640 / LMG 13131 / VPI 4355).